Consider the following 118-residue polypeptide: MMRRGEIWQVDLDPARGSEANNQRPAVVVSNDRANATATRLGRGVITVVPVTSNIAKVYPFQVLLSATTTGLQVDCKAQAEQIRSIATERLLRPIGRVSAAELAQLDEALKLHLDLWS.

It belongs to the PemK/MazF family. As to quaternary structure, forms a complex with cognate antitoxin MazE9.

Functionally, toxic component of a type II toxin-antitoxin (TA) system. Upon expression in E.coli and M.smegmatis inhibits cell growth and colony formation. Its toxic effect is neutralized by coexpression with cognate antitoxin MazE9. Acts as an mRNA interferase, specifically cleaving between U and C in UAC sequences. May cleave its cognate antitoxin's gene. In E.coli expression with non-cognate antitoxins VapB27 and VapB40 partially neutralizes the toxin. This is Endoribonuclease MazF9 (mazF9) from Mycobacterium tuberculosis (strain ATCC 25618 / H37Rv).